The following is an 81-amino-acid chain: ATP synthase subunit c, chloroplastic (81 aa).

A run of 2 helical transmembrane segments spans residues 3–23 (PLISAASVIAAGLAVGLASIG) and 57–77 (LAFMEALTIYGLVVALALLFA).

It belongs to the ATPase C chain family. As to quaternary structure, F-type ATPases have 2 components, F(1) - the catalytic core - and F(0) - the membrane proton channel. F(1) has five subunits: alpha(3), beta(3), gamma(1), delta(1), epsilon(1). F(0) has four main subunits: a(1), b(1), b'(1) and c(10-14). The alpha and beta chains form an alternating ring which encloses part of the gamma chain. F(1) is attached to F(0) by a central stalk formed by the gamma and epsilon chains, while a peripheral stalk is formed by the delta, b and b' chains.

It localises to the plastid. Its subcellular location is the chloroplast thylakoid membrane. In terms of biological role, f(1)F(0) ATP synthase produces ATP from ADP in the presence of a proton or sodium gradient. F-type ATPases consist of two structural domains, F(1) containing the extramembraneous catalytic core and F(0) containing the membrane proton channel, linked together by a central stalk and a peripheral stalk. During catalysis, ATP synthesis in the catalytic domain of F(1) is coupled via a rotary mechanism of the central stalk subunits to proton translocation. Functionally, key component of the F(0) channel; it plays a direct role in translocation across the membrane. A homomeric c-ring of between 10-14 subunits forms the central stalk rotor element with the F(1) delta and epsilon subunits. In Acorus calamus var. americanus (American sweet flag), this protein is ATP synthase subunit c, chloroplastic.